Reading from the N-terminus, the 199-residue chain is NADH-quinone oxidoreductase subunit C (199 aa).

It belongs to the complex I 30 kDa subunit family. In terms of assembly, NDH-1 is composed of 14 different subunits. Subunits NuoB, C, D, E, F, and G constitute the peripheral sector of the complex.

The protein resides in the cell inner membrane. It carries out the reaction a quinone + NADH + 5 H(+)(in) = a quinol + NAD(+) + 4 H(+)(out). NDH-1 shuttles electrons from NADH, via FMN and iron-sulfur (Fe-S) centers, to quinones in the respiratory chain. The immediate electron acceptor for the enzyme in this species is believed to be ubiquinone. Couples the redox reaction to proton translocation (for every two electrons transferred, four hydrogen ions are translocated across the cytoplasmic membrane), and thus conserves the redox energy in a proton gradient. The polypeptide is NADH-quinone oxidoreductase subunit C (Cupriavidus pinatubonensis (strain JMP 134 / LMG 1197) (Cupriavidus necator (strain JMP 134))).